Here is a 269-residue protein sequence, read N- to C-terminus: Regulatory protein RecX (269 aa).

Belongs to the RecX family.

The protein resides in the cytoplasm. Functionally, modulates RecA activity. The protein is Regulatory protein RecX of Listeria monocytogenes serotype 4b (strain F2365).